The following is a 321-amino-acid chain: Probable endolytic peptidoglycan transglycosylase RlpA (321 aa).

The protein belongs to the RlpA family.

Functionally, lytic transglycosylase with a strong preference for naked glycan strands that lack stem peptides. The chain is Probable endolytic peptidoglycan transglycosylase RlpA from Synechocystis sp. (strain ATCC 27184 / PCC 6803 / Kazusa).